Here is a 292-residue protein sequence, read N- to C-terminus: MTTARYRPTWDLALDPLVSCKLCLGEYPAEQMTTIAQCQCIFCTLCLKQYVELLIKEGLETAISCPDAACPKQGHLQENEIECMVAAEIMQRYKKLQFEREVLFDPCRTWCPASTCQAVCQLQDIGLQTPQLVQCKACDMEFCSACKARWHPGQGCPETMPITFLPGETSSAFKMEEGDAPIKRCPKCRVYIERDEGCAQMMCKNCKHAFCWYCLESLDDDFLLIHYDKGPCRNKLGHSRASVIWHRTQVVGIFAGFGLLLLVASPFLLLATPFVLCCKCKCSKGDDDPLPT.

Residues 16–236 (PLVSCKLCLG…YDKGPCRNKL (221 aa)) are TRIAD supradomain. Residues Cys-20, Cys-23, Cys-43, Cys-46, Cys-111, Cys-116, Cys-135, Cys-138, Cys-143, Cys-146, His-151, Cys-156, Cys-185, and Cys-188 each coordinate Zn(2+). The RING-type 1 zinc-finger motif lies at 20–70 (CKLCLGEYPAEQMTTIAQCQCIFCTLCLKQYVELLIKEGLETAISCPDAAC). Residues 91–156 (QRYKKLQFER…KARWHPGQGC (66 aa)) form an IBR-type zinc finger. The RING-type 2; atypical zinc finger occupies 185–214 (CPKCRVYIERDEGCAQMMCKNCKHAFCWYC). The active site involves Cys-198. 6 residues coordinate Zn(2+): Cys-203, Cys-206, Cys-211, Cys-214, His-226, and Cys-232. Residues 250–270 (VVGIFAGFGLLLLVASPFLLL) form a helical membrane-spanning segment.

This sequence belongs to the RBR family. RNF144 subfamily. In terms of assembly, self-associates. Interacts with UBE2L3. In terms of processing, autoubiquitinated.

It localises to the cell membrane. Its subcellular location is the cytoplasmic vesicle membrane. The enzyme catalyses [E2 ubiquitin-conjugating enzyme]-S-ubiquitinyl-L-cysteine + [acceptor protein]-L-lysine = [E2 ubiquitin-conjugating enzyme]-L-cysteine + [acceptor protein]-N(6)-ubiquitinyl-L-lysine.. It participates in protein modification; protein ubiquitination. In terms of biological role, E3 ubiquitin-protein ligase which accepts ubiquitin from E2 ubiquitin-conjugating enzymes UBE2L3 and UBE2L6 in the form of a thioester and then directly transfers the ubiquitin to targeted substrates. Mediates the ubiquitination and degradation of the DNA damage kinase PRKDC during DNA damage. Positively regulates DNA virus or exogenous cytosolic DNA-triggered innate immune response by mediating STING1 ubiquitination and increasing its 'Lys-6'-linked ubiquitination and translocation from the endoplasmic reticulum to the Golgi leading to downstream signaling pathways. Plays a positive role in EGF-dependent cell proliferation by prolonging EGF/EGFR signaling during EGF stimulation through EGFR ubiquitination. Increases ERK activity independently of EGFR signaling by promoting polyubiquitination and subsequent degradation of VRK3 in the cytosol. The polypeptide is E3 ubiquitin-protein ligase RNF144A (Rnf144a) (Mus musculus (Mouse)).